The sequence spans 197 residues: Putative peptidyl-prolyl cis-trans isomerase (197 aa).

A PPIase cyclophilin-type domain is found at 14-195 (NEIKVVMHTN…YDVVIESIDV (182 aa)).

The protein belongs to the cyclophilin-type PPIase family.

It carries out the reaction [protein]-peptidylproline (omega=180) = [protein]-peptidylproline (omega=0). In terms of biological role, PPIases accelerate the folding of proteins. It catalyzes the cis-trans isomerization of proline imidic peptide bonds in oligopeptides. In Staphylococcus epidermidis (strain ATCC 35984 / DSM 28319 / BCRC 17069 / CCUG 31568 / BM 3577 / RP62A), this protein is Putative peptidyl-prolyl cis-trans isomerase.